The following is a 1635-amino-acid chain: U3 small nucleolar RNA-associated protein 10 (1635 aa).

The segment at 781–803 (TTSMDAPSDESTKRRRRSSSSTV) is disordered. 2 helical membrane passes run 1141-1161 (PELLNVILSLLPLPLFVTVAG) and 1288-1308 (IALSVLALFATFIKRLPSFMV).

The protein belongs to the HEATR1/UTP10 family. In terms of assembly, component of the ribosomal small subunit (SSU) processome.

Its subcellular location is the nucleus. It localises to the nucleolus. The protein resides in the membrane. In terms of biological role, involved in nucleolar processing of pre-18S ribosomal RNA. Involved in ribosome biosynthesis. The chain is U3 small nucleolar RNA-associated protein 10 from Yarrowia lipolytica (strain CLIB 122 / E 150) (Yeast).